The following is a 756-amino-acid chain: Cilium assembly protein DZIP1L (756 aa).

The interval 1 to 20 (MLGQFSPGEPYTTSLSSTPP) is disordered. The segment covering 10 to 19 (PYTTSLSSTP) has biased composition (low complexity). A coiled-coil region spans residues 108 to 158 (DFLSSQLAGLEERLQAATSLVQQGEGQRAELEKSLQETKQENRRRKQLIAT). The segment at 171–194 (HKCQFCEKSFVNYSYLQAHVQRRH) adopts a C2H2-type zinc-finger fold. Basic and acidic residues-rich tracts occupy residues 193-202 (RHPEVTDAEK), 237-262 (NLRR…ERWK), 319-335 (DPEK…LRER), and 344-365 (RRKF…KSEN). Disordered regions lie at residues 193–212 (RHPE…EEME), 233–262 (QQAD…ERWK), 310–365 (NNAS…KSEN), 409–466 (KIKK…MRES), 531–626 (VKSL…AYIT), and 693–756 (IKTP…GTSA). 2 coiled-coil regions span residues 196–283 (EVTD…FLQE) and 321–416 (EKEM…LSAT). The segment covering 534–558 (LQKSSGKPTPNTLKQRGKKTSTPLN) has biased composition (polar residues). The segment covering 560–578 (KSLRFRQDSKASDRREKSQ) has biased composition (basic and acidic residues). Pro residues predominate over residues 586 to 598 (TPTPRSKAPPPNQ).

This sequence belongs to the DZIP C2H2-type zinc-finger protein family.

The protein resides in the cytoplasm. It localises to the cytoskeleton. The protein localises to the cilium basal body. It is found in the microtubule organizing center. Its subcellular location is the centrosome. The protein resides in the centriole. In terms of biological role, involved in primary cilium formation. Probably acts as a transition zone protein required for localization of PKD1/PC1 and PKD2/PC2 to the ciliary membrane. This Danio rerio (Zebrafish) protein is Cilium assembly protein DZIP1L (dzip1l).